Consider the following 303-residue polypeptide: Olfactory receptor 4X2 (303 aa).

Over 1 to 17 the chain is Extracellular; that stretch reads MTEFIFLVLSPNQEVQR. The chain crosses the membrane as a helical span at residues 18–41; sequence VCFVIFLFLYTAIVLGNFLIVLTV. Residues 42–49 are Cytoplasmic-facing; the sequence is MTSRSLGS. The helical transmembrane segment at 50–71 threads the bilayer; that stretch reads PMYFFLSYLSFMEICYSSATAP. Topologically, residues 72-92 are extracellular; the sequence is KLISDLLAERKVISWWGCMAQ. A disulfide bond links Cys-89 and Cys-181. The chain crosses the membrane as a helical span at residues 93 to 112; sequence LFFLHFFGGTEIFLLTVMAY. At 113–131 the chain is on the cytoplasmic side; sequence DHYVAICKPLSYTTIMNWQ. The chain crosses the membrane as a helical span at residues 132–150; sequence VCTVLVGIAWVGGFMHSFA. At 151–187 the chain is on the extracellular side; that stretch reads QILLIFHLLFCGPNVINHYFCDLVPLLKLACSDTFLI. Residues 188–211 traverse the membrane as a helical segment; it reads GLLIVANGGTLSVISFGVLLASYM. The Cytoplasmic portion of the chain corresponds to 212–227; that stretch reads VILLHLRTWSSEGWCK. Residues 228-250 form a helical membrane-spanning segment; sequence ALSTCGSHFAVVILFFGPCVFNS. Residues 251–261 lie on the Extracellular side of the membrane; the sequence is LRPSTTLPIDK. The helical transmembrane segment at 262–281 threads the bilayer; sequence MVAVFYTVITAILNPVIYSL. At 282-303 the chain is on the cytoplasmic side; it reads RNAEMRKAMKRLWIRTLRLNEK.

Belongs to the G-protein coupled receptor 1 family.

The protein localises to the cell membrane. In terms of biological role, odorant receptor. This is Olfactory receptor 4X2 (OR4X2) from Homo sapiens (Human).